The primary structure comprises 142 residues: Struthiocalcin-2 (142 aa).

Disulfide bonds link Cys6–Cys17, Cys34–Cys138, and Cys113–Cys130. One can recognise a C-type lectin domain in the interval 13-139; the sequence is FDGRCYGFFP…CSDRKPFICE (127 aa). Phosphoserine occurs at positions 62, 66, and 68.

Its subcellular location is the secreted. The protein localises to the extracellular space. It localises to the extracellular matrix. The sequence is that of Struthiocalcin-2 from Struthio camelus (Common ostrich).